The following is a 247-amino-acid chain: TLC domain-containing protein 1 (247 aa).

The first 35 residues, 1 to 35, serve as a signal peptide directing secretion; it reads MPRLLHPALPLLLGATLTFRALRRALCRLPLPVHV. The Extracellular segment spans residues 36–46; sequence RADPLRTWRWH. Residues 40-234 enclose the TLC domain; sequence LRTWRWHNLL…LLRSDFCPEH (195 aa). A helical membrane pass occupies residues 47–67; sequence NLLVSFAHSIVSGIWALLCVW. Residues 68–83 lie on the Cytoplasmic side of the membrane; sequence QTPDMLVEIETAWSLS. A helical membrane pass occupies residues 84–104; it reads GYLLVCFSAGYFIHDTVDIVA. Residues 105-123 are Extracellular-facing; that stretch reads SGQTRASWEYLVHHVMAMG. Positions 124-144 form an intramembrane region, helical; sequence AFFSGIFWSSFVGGGVLTLLV. The Extracellular segment spans residues 145–173; the sequence is EVSNIFLTIRMMMKISNAQDHLLYRVNKY. Residues 174–194 form a helical membrane-spanning segment; sequence VNLVMYFLFRLAPQAYLTHFF. The Cytoplasmic segment spans residues 195 to 201; that stretch reads LRYVNQR. The helical transmembrane segment at 202-222 threads the bilayer; that stretch reads TLGTFLLGILLMLDVMIIIYF. The Extracellular portion of the chain corresponds to 223 to 247; it reads SRLLRSDFCPEHVPKKQHKDKFLTE.

Its subcellular location is the cell membrane. In terms of biological role, regulates the composition and fluidity of the plasma membrane. Inhibits the incorporation of membrane-fluidizing phospholipids containing omega-3 long-chain polyunsaturated fatty acids (LCPUFA) and thereby promotes membrane rigidity. Does not appear to have any effect on LCPUFA synthesis. The sequence is that of TLC domain-containing protein 1 (TLCD1) from Homo sapiens (Human).